Here is a 300-residue protein sequence, read N- to C-terminus: Cation-efflux pump FieF (300 aa).

A helical transmembrane segment spans residues 24–44 (LLIKIFAWWYTGSVSILAALV). Zn(2+) is bound by residues D45 and D49. Helical transmembrane passes span 82–102 (AALAQSMFISGSALFLFLTSI) and 114–134 (PGVGIGVTVIALICTIILVTF). 2 residues coordinate Zn(2+): H153 and D157. 2 consecutive transmembrane segments (helical) span residues 156–176 (SDVMMNGAILIALGLSWYGWH) and 178–198 (ADALFALGIGIYILYSALRMG).

This sequence belongs to the cation diffusion facilitator (CDF) transporter (TC 2.A.4) family. FieF subfamily. As to quaternary structure, homodimer.

Its subcellular location is the cell inner membrane. The enzyme catalyses Zn(2+)(in) + H(+)(out) = Zn(2+)(out) + H(+)(in). It carries out the reaction Cd(2+)(in) + H(+)(out) = Cd(2+)(out) + H(+)(in). It catalyses the reaction Fe(2+)(in) + H(+)(out) = Fe(2+)(out) + H(+)(in). Functionally, divalent metal cation transporter which exports Zn(2+), Cd(2+) and possibly Fe(2+). May be involved in zinc and iron detoxification by efflux. The sequence is that of Cation-efflux pump FieF from Salmonella enteritidis PT4 (strain P125109).